The sequence spans 458 residues: Retinoic acid receptor gamma (458 aa).

Residues 1–89 are modulating; sequence MATNKERLFA…PPPPPRVYKP (89 aa). Omega-N-methylarginine is present on Arg34. Residues 58 to 83 form a disordered region; it reads MASLSVETQSTSSEEMVPSSPSPPPP. Positions 62–71 are enriched in polar residues; that stretch reads SVETQSTSSE. NR C4-type zinc fingers lie at residues 90–110 and 126–150; these read CFVC…CEGC and CHRD…LQKC. Residues 90 to 155 constitute a DNA-binding region (nuclear receptor); that stretch reads CFVCNDKSSG…RLQKCFEVGM (66 aa). A hinge region spans residues 156 to 184; it reads SKEAVRNDRNKKKKEVKEEGSPDSYELSP. The tract at residues 161–180 is disordered; that stretch reads RNDRNKKKKEVKEEGSPDSY. Glycyl lysine isopeptide (Lys-Gly) (interchain with G-Cter in SUMO2) cross-links involve residues Lys172 and Lys401. The NR LBD domain occupies 185-419; that stretch reads QLEELITKVS…PLIREMLENP (235 aa). Residues 409–458 form a disordered region; sequence PPLIREMLENPEMFEDDSSKPGPHPKASSEDEAPGGQGKRGQSPQPDQGP. Residues 448 to 458 are compositionally biased toward polar residues; it reads RGQSPQPDQGP.

It belongs to the nuclear hormone receptor family. NR1 subfamily. As to quaternary structure, homodimer. Heterodimer with a RXR molecule. Binds DNA preferentially as a RAR/RXR heterodimer. Forms a complex with PUS1 and the SRA1 RNA in the nucleus.

It localises to the nucleus. Its subcellular location is the cytoplasm. Receptor for retinoic acid. Retinoic acid receptors bind as heterodimers to their target response elements in response to their ligands, all-trans or 9-cis retinoic acid, and regulate gene expression in various biological processes. The RAR/RXR heterodimers bind to the retinoic acid response elements (RARE) composed of tandem 5'-AGGTCA-3' sites known as DR1-DR5. In the absence of ligand, acts mainly as an activator of gene expression due to weak binding to corepressors. Required for limb bud development. In concert with RARA or RARB, required for skeletal growth, matrix homeostasis and growth plate function. The polypeptide is Retinoic acid receptor gamma (Rarg) (Mus musculus (Mouse)).